A 371-amino-acid chain; its full sequence is Conglutinin (371 aa).

The first 20 residues, 1-20 (MLLLPLSVLLLLTQPWRSLG), serve as a signal peptide directing secretion. The region spanning 46-216 (GLPGHDGQDG…TGAKGESGLA (171 aa)) is the Collagen-like domain. Residues 47–215 (LPGHDGQDGR…ETGAKGESGL (169 aa)) form a disordered region. Basic and acidic residues predominate over residues 51–65 (DGQDGRECPHGEKGD). The residue at position 63 (Lys63) is a 5-hydroxylysine. Positions 71–83 (PAGRAGRPGWVGP) are enriched in low complexity. Residue Pro78 is modified to 4-hydroxyproline. Residue Lys87 is modified to 5-hydroxylysine. 4-hydroxyproline is present on Pro96. The residue at position 99 (Lys99) is a 5-hydroxylysine. 4-hydroxyproline occurs at positions 108, 111, 129, and 132. Residues Lys135 and Lys141 each carry the 5-hydroxylysine modification. Residues 139-148 (GPKGGVGAPG) are compositionally biased toward gly residues. Residues Pro147 and Pro153 each carry the 4-hydroxyproline modification. A 5-hydroxylysine mark is found at Lys159 and Lys162. 4-hydroxyproline is present on residues Pro171 and Pro195. Lys198 bears the 5-hydroxylysine mark. The short motif at 201-203 (RGD) is the Cell attachment site element. The C-type lectin domain occupies 273–371 (QLCREAKGQL…SKQLLVICEF (99 aa)). 2 disulfides stabilise this stretch: Cys275-Cys369 and Cys347-Cys361. An N-linked (GlcNAc...) asparagine glycan is attached at Asn337.

This sequence belongs to the SFTPD family. Oligomeric complex of 4 set of homotrimers. In terms of processing, the hydroxylysines may be O-glycosylated.

Calcium-dependent lectin-like protein which binds to a yeast cell wall extract and immune complexes through the complement component (C3bi). It is capable of binding non-reducing terminal N-acetylglucosamine, mannose, and fucose residues. This chain is Conglutinin (CGN1), found in Bos taurus (Bovine).